The following is a 266-amino-acid chain: 3-methyl-2-oxobutanoate hydroxymethyltransferase (266 aa).

Mg(2+)-binding residues include Asp45 and Asp84. Residues 45–46, Asp84, and Lys112 each bind 3-methyl-2-oxobutanoate; that span reads DS. Glu114 serves as a coordination point for Mg(2+). The active-site Proton acceptor is Glu181.

Belongs to the PanB family. As to quaternary structure, homodecamer; pentamer of dimers. It depends on Mg(2+) as a cofactor.

It localises to the cytoplasm. The catalysed reaction is 3-methyl-2-oxobutanoate + (6R)-5,10-methylene-5,6,7,8-tetrahydrofolate + H2O = 2-dehydropantoate + (6S)-5,6,7,8-tetrahydrofolate. It participates in cofactor biosynthesis; (R)-pantothenate biosynthesis; (R)-pantoate from 3-methyl-2-oxobutanoate: step 1/2. Functionally, catalyzes the reversible reaction in which hydroxymethyl group from 5,10-methylenetetrahydrofolate is transferred onto alpha-ketoisovalerate to form ketopantoate. This chain is 3-methyl-2-oxobutanoate hydroxymethyltransferase, found in Pseudomonas syringae pv. syringae (strain B728a).